A 78-amino-acid polypeptide reads, in one-letter code: Large ribosomal subunit protein bL28 (78 aa).

Positions Met-1 to Thr-25 are disordered.

Belongs to the bacterial ribosomal protein bL28 family.

This Tolumonas auensis (strain DSM 9187 / NBRC 110442 / TA 4) protein is Large ribosomal subunit protein bL28.